A 251-amino-acid polypeptide reads, in one-letter code: Cholesterol 25-hydroxylase-like protein (251 aa).

Transmembrane regions (helical) follow at residues 22–42 (FFPVLFSITVYLSFCLPFVLL), 69–89 (WSCLALSLYNHVVYIFPLSVL), and 108–128 (VVWDLAACLLLFDFQYFVWHL). The Fatty acid hydroxylase domain maps to 113–247 (AACLLLFDFQ…FTHWDKLFGT (135 aa)). A Histidine box-1 motif is present at residues 126–130 (WHLLH). A Histidine box-2 motif is present at residues 141 to 145 (HKVHH). The Histidine box-3 signature appears at 222-228 (HHDVHHQ).

The protein belongs to the sterol desaturase family. Fe cation serves as cofactor.

It is found in the endoplasmic reticulum membrane. The catalysed reaction is cholesterol + AH2 + O2 = 25-hydroxycholesterol + A + H2O. It catalyses the reaction cholesterol + NADPH + O2 + H(+) = 25-hydroxycholesterol + NADP(+) + H2O. Catalyzes the formation of 25-hydroxycholesterol from cholesterol, leading to repress cholesterol biosynthetic enzymes. Plays a key role in cell positioning and movement in lymphoid tissues: 25-hydroxycholesterol is an intermediate in biosynthesis of 7-alpha,25-dihydroxycholesterol (7-alpha,25-OHC), an oxysterol that acts as a ligand for the G protein-coupled receptor GPR183/EBI2, a chemotactic receptor for a number of lymphoid cells. May play an important role in regulating lipid metabolism by synthesizing a corepressor that blocks sterol regulatory element binding protein (SREBP) processing. In testis, production of 25-hydroxycholesterol by macrophages may play a role in Leydig cell differentiation. The sequence is that of Cholesterol 25-hydroxylase-like protein (ch25h) from Danio rerio (Zebrafish).